The following is a 193-amino-acid chain: Acyl carrier protein phosphodiesterase (193 aa).

This sequence belongs to the AcpH family.

The enzyme catalyses holo-[ACP] + H2O = apo-[ACP] + (R)-4'-phosphopantetheine + H(+). Converts holo-ACP to apo-ACP by hydrolytic cleavage of the phosphopantetheine prosthetic group from ACP. This Escherichia coli O127:H6 (strain E2348/69 / EPEC) protein is Acyl carrier protein phosphodiesterase.